Reading from the N-terminus, the 207-residue chain is Probable GTP-binding protein EngB (207 aa).

One can recognise an EngB-type G domain in the interval 23–203 (GAPEVCFVGR…GAHIENWISP (181 aa)). GTP-binding positions include 31-38 (GRSNAGKS), 58-62 (GRTRL), 83-86 (DLPG), 150-153 (TKAD), and 182-184 (FSS). 2 residues coordinate Mg(2+): S38 and T60.

The protein belongs to the TRAFAC class TrmE-Era-EngA-EngB-Septin-like GTPase superfamily. EngB GTPase family. It depends on Mg(2+) as a cofactor.

Its function is as follows. Necessary for normal cell division and for the maintenance of normal septation. In Bordetella bronchiseptica (strain ATCC BAA-588 / NCTC 13252 / RB50) (Alcaligenes bronchisepticus), this protein is Probable GTP-binding protein EngB.